The chain runs to 385 residues: Meiosis-specific protein MEI4 (385 aa).

An interaction with REC114 region spans residues 1 to 126 (MDVQKWYLRT…LSQHFVESCT (126 aa)). The interval 86–110 (AQEPKSSESTLTSMEDSGCDLSNEQ) is disordered. The segment covering 92–107 (SESTLTSMEDSGCDLS) has biased composition (polar residues).

Belongs to the MEI4L family. In terms of assembly, part of the MCD recombinosome complex, at least composed of IHO1, REC114 and MEI4. Forms a complex with REC114; the interaction is required for MEI4 stability. Interacts (via N-terminal domain) with REC114 (via C-terminal domain). Interacts with IHO1.

The protein localises to the chromosome. In terms of biological role, required for DNA double-strand breaks (DSBs) formation in unsynapsed regions during meiotic recombination. Probably acts by forming a complex with IHO1 and REC114, which activates DSBs formation in unsynapsed regions, an essential step to ensure completion of synapsis. This Homo sapiens (Human) protein is Meiosis-specific protein MEI4.